The following is a 344-amino-acid chain: Holliday junction branch migration complex subunit RuvB (344 aa).

Residues Met1 to Ser10 show a composition bias toward low complexity. The disordered stretch occupies residues Met1–Arg37. The interval Pro13–Tyr197 is large ATPase domain (RuvB-L). Residues Leu36, Arg37, Gly78, Lys81, Thr82, Thr83, Glu144–Phe146, Arg187, Tyr197, and Arg234 contribute to the ATP site. Thr82 contacts Mg(2+). Positions Ser198 to Arg268 are small ATPAse domain (RuvB-S). A head domain (RuvB-H) region spans residues Gly271–Ala344. The DNA site is built by Arg326 and Arg331.

It belongs to the RuvB family. In terms of assembly, homohexamer. Forms an RuvA(8)-RuvB(12)-Holliday junction (HJ) complex. HJ DNA is sandwiched between 2 RuvA tetramers; dsDNA enters through RuvA and exits via RuvB. An RuvB hexamer assembles on each DNA strand where it exits the tetramer. Each RuvB hexamer is contacted by two RuvA subunits (via domain III) on 2 adjacent RuvB subunits; this complex drives branch migration. In the full resolvosome a probable DNA-RuvA(4)-RuvB(12)-RuvC(2) complex forms which resolves the HJ.

The protein localises to the cytoplasm. The catalysed reaction is ATP + H2O = ADP + phosphate + H(+). In terms of biological role, the RuvA-RuvB-RuvC complex processes Holliday junction (HJ) DNA during genetic recombination and DNA repair, while the RuvA-RuvB complex plays an important role in the rescue of blocked DNA replication forks via replication fork reversal (RFR). RuvA specifically binds to HJ cruciform DNA, conferring on it an open structure. The RuvB hexamer acts as an ATP-dependent pump, pulling dsDNA into and through the RuvAB complex. RuvB forms 2 homohexamers on either side of HJ DNA bound by 1 or 2 RuvA tetramers; 4 subunits per hexamer contact DNA at a time. Coordinated motions by a converter formed by DNA-disengaged RuvB subunits stimulates ATP hydrolysis and nucleotide exchange. Immobilization of the converter enables RuvB to convert the ATP-contained energy into a lever motion, pulling 2 nucleotides of DNA out of the RuvA tetramer per ATP hydrolyzed, thus driving DNA branch migration. The RuvB motors rotate together with the DNA substrate, which together with the progressing nucleotide cycle form the mechanistic basis for DNA recombination by continuous HJ branch migration. Branch migration allows RuvC to scan DNA until it finds its consensus sequence, where it cleaves and resolves cruciform DNA. The polypeptide is Holliday junction branch migration complex subunit RuvB (Synechococcus sp. (strain RCC307)).